Reading from the N-terminus, the 637-residue chain is Phosphomethylpyrimidine synthase (637 aa).

Substrate is bound by residues Asn242, Met271, Tyr300, His336, 356-358 (SRG), 397-400 (DGLR), and Glu436. His440 is a Zn(2+) binding site. A substrate-binding site is contributed by Tyr463. Position 504 (His504) interacts with Zn(2+). Residues Cys584, Cys587, and Cys592 each contribute to the [4Fe-4S] cluster site.

Belongs to the ThiC family. As to quaternary structure, homodimer. It depends on [4Fe-4S] cluster as a cofactor.

The catalysed reaction is 5-amino-1-(5-phospho-beta-D-ribosyl)imidazole + S-adenosyl-L-methionine = 4-amino-2-methyl-5-(phosphooxymethyl)pyrimidine + CO + 5'-deoxyadenosine + formate + L-methionine + 3 H(+). The protein operates within cofactor biosynthesis; thiamine diphosphate biosynthesis. Catalyzes the synthesis of the hydroxymethylpyrimidine phosphate (HMP-P) moiety of thiamine from aminoimidazole ribotide (AIR) in a radical S-adenosyl-L-methionine (SAM)-dependent reaction. The sequence is that of Phosphomethylpyrimidine synthase from Bordetella bronchiseptica (strain ATCC BAA-588 / NCTC 13252 / RB50) (Alcaligenes bronchisepticus).